We begin with the raw amino-acid sequence, 274 residues long: Diaminopimelate epimerase (274 aa).

Residues N11, Q44, and N64 each coordinate substrate. C73 acts as the Proton donor in catalysis. Substrate contacts are provided by residues 74–75 (GN), N157, N190, and 208–209 (ER). The active-site Proton acceptor is the C217. Substrate is bound at residue 218 to 219 (GS).

This sequence belongs to the diaminopimelate epimerase family. Homodimer.

The protein localises to the cytoplasm. The catalysed reaction is (2S,6S)-2,6-diaminopimelate = meso-2,6-diaminopimelate. The protein operates within amino-acid biosynthesis; L-lysine biosynthesis via DAP pathway; DL-2,6-diaminopimelate from LL-2,6-diaminopimelate: step 1/1. In terms of biological role, catalyzes the stereoinversion of LL-2,6-diaminopimelate (L,L-DAP) to meso-diaminopimelate (meso-DAP), a precursor of L-lysine and an essential component of the bacterial peptidoglycan. The chain is Diaminopimelate epimerase from Actinobacillus pleuropneumoniae serotype 3 (strain JL03).